Consider the following 552-residue polypeptide: Metal transporter Nramp6.1 (552 aa).

N-linked (GlcNAc...) asparagine glycosylation is present at asparagine 11. Transmembrane regions (helical) follow at residues 55–75 (FLSY…PGNL), 88–108 (ELLW…SLAA), 133–155 (CLWL…GTAF), 159–181 (ILFN…LLLG), 189–209 (KLEL…FGEM), 238–258 (IALL…ALVL), and 275–295 (YFLI…LAVI). A glycan (N-linked (GlcNAc...) asparagine) is linked at asparagine 306. The next 5 membrane-spanning stretches (helical) occupy residues 338–358 (IYAI…TYAG), 377–397 (LVTR…GGSS), 402–422 (LIII…IPLL), 438–458 (IYII…NIYY), and 478–498 (VFIG…VIYL). Positions 511 to 552 (PNKNDPQQQTNMENGLAKSTEGPEMVDRAPYREDLADIPLPE) are disordered. Polar residues predominate over residues 514–523 (NDPQQQTNME). A compositionally biased stretch (basic and acidic residues) spans 535 to 545 (MVDRAPYREDL).

This sequence belongs to the NRAMP (TC 2.A.55) family.

The protein resides in the membrane. Probable divalent metal transporter. This chain is Metal transporter Nramp6.1, found in Populus trichocarpa (Western balsam poplar).